The chain runs to 548 residues: Biotin-dependent acetyl-/propionyl-coenzyme A carboxylase beta5 subunit (548 aa).

The segment at 1 to 23 (MTSVTDRSAHSAERSTEHTIDIH) is disordered. The segment covering 7–21 (RSAHSAERSTEHTID) has biased composition (basic and acidic residues). The region spanning 25–281 (TAGKLAELHK…NNSTDAPRYQ (257 aa)) is the CoA carboxyltransferase N-terminal domain. Residues 295 to 541 (DEDLELDTLI…ERKIAQLPPK (247 aa)) form the CoA carboxyltransferase C-terminal domain.

It belongs to the AccD/PCCB family. In terms of assembly, forms homohexamers. The biotin-dependent acyl-CoA carboxylase complex is composed of AccA3, which contains the biotin carboxylase (BC) and biotin carboxyl carrier protein (BCCP) domains, and AccD5, which contains the carboxyl transferase (CT) domain. The AccA3/AccD5 complex forms a dodecamer, and can associate with the epsilon subunit AccE5 (Rv3280), which stimulates carboxylation by the complex. Is also part of the long-chain acyl-CoA carboxylase (LCC) complex, which is composed of AccA3, AccD4, AccD5 and AccE5. The four subunits are essential for activity, but AccD5, together with AccE5, probably plays a structural role rather than a catalytic one.

The enzyme catalyses N(6)-carboxybiotinyl-L-lysyl-[protein] + acetyl-CoA = N(6)-biotinyl-L-lysyl-[protein] + malonyl-CoA. The catalysed reaction is N(6)-carboxybiotinyl-L-lysyl-[protein] + propanoyl-CoA = methylmalonyl-CoA + N(6)-biotinyl-L-lysyl-[protein]. It functions in the pathway lipid metabolism; mycolic acid biosynthesis. With respect to regulation, carboxylase activity of the AccA3/AccD5 complex is stimulated by interaction with AccE5. Component of a biotin-dependent acyl-CoA carboxylase complex. This subunit transfers the CO2 from carboxybiotin to the CoA ester substrate. When associated with the alpha3 subunit AccA3, is involved in the carboxylation of acetyl-CoA and propionyl-CoA, with a preference for propionyl-CoA. Is also required for the activity of the long-chain acyl-CoA carboxylase (LCC) complex. The protein is Biotin-dependent acetyl-/propionyl-coenzyme A carboxylase beta5 subunit of Mycobacterium tuberculosis (strain ATCC 25618 / H37Rv).